The following is a 193-amino-acid chain: Adenine phosphoribosyltransferase (193 aa).

This sequence belongs to the purine/pyrimidine phosphoribosyltransferase family. In terms of assembly, homodimer.

It is found in the cytoplasm. It catalyses the reaction AMP + diphosphate = 5-phospho-alpha-D-ribose 1-diphosphate + adenine. It participates in purine metabolism; AMP biosynthesis via salvage pathway; AMP from adenine: step 1/1. Catalyzes a salvage reaction resulting in the formation of AMP, that is energically less costly than de novo synthesis. In Bifidobacterium longum subsp. infantis (strain ATCC 15697 / DSM 20088 / JCM 1222 / NCTC 11817 / S12), this protein is Adenine phosphoribosyltransferase.